The chain runs to 279 residues: Alcohol dehydrogenase-related 31 kDa protein (279 aa).

11–34 (YVADCGGIALETSKVLMTKNIAKL) is a binding site for NAD(+). Substrate is bound at residue serine 139. Tyrosine 152 (proton acceptor) is an active-site residue.

It belongs to the short-chain dehydrogenases/reductases (SDR) family.

This is Alcohol dehydrogenase-related 31 kDa protein (Adhr) from Drosophila guanche (Fruit fly).